The sequence spans 131 residues: Protein DfrA (131 aa).

The protein belongs to the RutC family.

The polypeptide is Protein DfrA (dfrA) (Myxococcus xanthus).